The following is a 212-amino-acid chain: Large ribosomal subunit protein uL1 (212 aa).

This sequence belongs to the universal ribosomal protein uL1 family. As to quaternary structure, part of the 50S ribosomal subunit.

Its function is as follows. Binds directly to 23S rRNA. Probably involved in E site tRNA release. Functionally, protein L1 is also a translational repressor protein, it controls the translation of its operon by binding to its mRNA. The sequence is that of Large ribosomal subunit protein uL1 from Halobacterium salinarum (strain ATCC 29341 / DSM 671 / R1).